The following is a 506-amino-acid chain: MSSGLSLERACAVALGIVASASLVAAGPCDIYSSGGTPCVAAHSTTRALYSAYTGALYQVKRGSDGSTTDIAPLSAGGVADAATQDSFCANTTCLITIIYDQSGRGNHLTQAPPGGFNGPESNGYDNLASAVGAPVTLNGKKAYGVFMSPGTGYRNNAASGTATGDEAEGMYAVLDGTHYNSACCFDYGNAEVSNTDTGNGHMEAIYYGDNTVWGSGAGSGPWIMADLENGLFSGLSSKNNAGDPSISYRFVTAVVKGEANQWSIRGANAASGSLSTYYSGARPSASGYNPMSKEGAIILGIGGDNSNGAQGTFYEGVMTSGYPSDATENSVQADIVAAKYAIASLTSGPALTVGSSISLQVTTAGYTTRYLAHDGSTVNTQVVSSSSTTALKQQASWTVRTGLANSACFSFESVDTPGSYIRHYNFALLLNANDGTKQFYEDATFCPQAGLNGQGNSIRSWSYPTRYFRHYENVLYVASNGGVQTFDATTSFNDDVSWVVSTGFA.

An N-terminal signal peptide occupies residues 1 to 26 (MSSGLSLERACAVALGIVASASLVAA). The tract at residues 27–343 (GPCDIYSSGG…ADIVAAKYAI (317 aa)) is catalytic. 3 disulfide bridges follow: cysteine 29-cysteine 39, cysteine 89-cysteine 94, and cysteine 184-cysteine 185. Asparagine 91 carries an N-linked (GlcNAc...) asparagine glycan. Residue aspartate 227 participates in substrate binding. Catalysis depends on glutamate 229, which acts as the Nucleophile. Residues asparagine 230 and glycine 304 each contribute to the substrate site. The active-site Proton donor is aspartate 305. The ABD stretch occupies residues 344–506 (ASLTSGPALT…VSWVVSTGFA (163 aa)). Cysteine 409 and cysteine 447 are joined by a disulfide. Substrate is bound by residues histidine 424, asparagine 426, phenylalanine 427, aspartate 443, histidine 471, glutamate 473, leucine 476, and aspartate 496.

Belongs to the glycosyl hydrolase 54 family.

The protein resides in the secreted. It carries out the reaction Hydrolysis of terminal non-reducing alpha-L-arabinofuranoside residues in alpha-L-arabinosides.. It functions in the pathway glycan metabolism; L-arabinan degradation. Alpha-L-arabinofuranosidase involved in the degradation of arabinoxylan, a major component of plant hemicellulose. Able to hydrolyze 1,5-, 1,3- and 1,2-alpha-linkages not only in L-arabinofuranosyl oligosaccharides, but also in polysaccharides containing terminal non-reducing L-arabinofuranoses in side chains, like L-arabinan, arabinogalactan and arabinoxylan. The protein is Probable alpha-L-arabinofuranosidase B (abfB) of Aspergillus flavus (strain ATCC 200026 / FGSC A1120 / IAM 13836 / NRRL 3357 / JCM 12722 / SRRC 167).